The following is a 320-amino-acid chain: Acetaldehyde dehydrogenase 2 (320 aa).

The active-site Acyl-thioester intermediate is cysteine 129. Residues 160 to 168 and asparagine 287 each bind NAD(+); that span reads SAGPGTRAN.

It belongs to the acetaldehyde dehydrogenase family.

It catalyses the reaction acetaldehyde + NAD(+) + CoA = acetyl-CoA + NADH + H(+). The chain is Acetaldehyde dehydrogenase 2 from Burkholderia cenocepacia (strain ATCC BAA-245 / DSM 16553 / LMG 16656 / NCTC 13227 / J2315 / CF5610) (Burkholderia cepacia (strain J2315)).